The chain runs to 90 residues: Probable Fe(2+)-trafficking protein (90 aa).

This sequence belongs to the Fe(2+)-trafficking protein family.

Functionally, could be a mediator in iron transactions between iron acquisition and iron-requiring processes, such as synthesis and/or repair of Fe-S clusters in biosynthetic enzymes. In Pseudomonas aeruginosa (strain UCBPP-PA14), this protein is Probable Fe(2+)-trafficking protein.